A 364-amino-acid polypeptide reads, in one-letter code: Protein IncC (364 aa).

3 stretches are compositionally biased toward basic and acidic residues: residues 1 to 10 (MGVIHEETAY), 26 to 42 (ADHR…EATG), and 89 to 100 (HRPEVGSGRQEK). Disordered regions lie at residues 1–63 (MGVI…ASRV) and 75–102 (VRAG…EKTG).

The protein belongs to the ParA family.

Functionally, this is one of the proteins encoded by the trfB operon; it is involved in plasmid maintenance and replication. The sequence is that of Protein IncC (incC) from Escherichia coli.